Consider the following 139-residue polypeptide: Non-structural protein 1 (139 aa).

The short motif at 136-139 is the DLNP; interaction with MAP1B element; sequence DLNS.

The protein belongs to the pneumovirus non-structural protein 1 family. As to quaternary structure, monomer. Homomultimer. Heteromultimer with NS2. Interacts with the matrix protein M. Interacts with host ELOC and CUL2; this interaction allows NS1 to form an active E3 ligase with ELOC and CUL2. Interacts with host IRF3; this interaction leads to the disrupted association of IRF3 with CREBBP and thus reduced binding of IRF3 to the IFN-beta promoter. Interacts with host MAVS; this interaction prevents MAVS binding to RIGI and inhibits signaling pathway leading to interferon production. Interacts with host MAP1B/microtubule-associated protein 1B. Interacts with host TRIM25 (via SPRY domain); this interaction suppresses RIGI ubiquitination and results in decreased interaction between RIGI and MAVS.

It localises to the host cytoplasm. The protein resides in the host mitochondrion. The protein localises to the host nucleus. Its function is as follows. Plays a major role in antagonizing the type I IFN-mediated antiviral response by degrading or inhibiting multiple cellular factors required for either IFN induction or response pathways. Acts cooperatively with NS2 to repress activation and nuclear translocation of host IFN-regulatory factor IRF3. Also disrupts the association of IRF3 with CREBBP. Interacts with host mitochondrial-associated membrane (MAM) MAVS and prevents the interaction with RIGI. Interacts with TRIM25 to suppress TRIM25-mediated RIGI ubiquitination and thereby RIGI-MAVS interaction. Together with NS2, participates in the proteasomal degradation of host STAT2, IRF3, IRF7, TBK1 and RIGI through a NS-degradasome involving CUL2 and Elongin-C. The degradasome requires an intact mitochondrial MAVS. Decreases the levels of host TRAF3 and IKBKE/IKK-epsilon. As functions other than disruptions of the type I IFN-mediated antiviral signaling pathways, induces host SOCS1 and SOCS3 expression. Suppresses premature apoptosis by an NF-kappa-B-dependent, interferon-independent mechanism and thus facilitates virus growth. Additionally, NS1 may serve some inhibitory role in viral transcription and RNA replication. Suppresses proliferation and activation of host CD103+ CD8+ cytotoxic T-lymphocytes and Th17 helper T-lymphocytes. This chain is Non-structural protein 1 (1C), found in Homo sapiens (Human).